Consider the following 570-residue polypeptide: Rho GTPase-activating protein gacEE (570 aa).

Positions 127–233 constitute a PH domain; that stretch reads NSDISGVLLK…WVTTINNCID (107 aa). One can recognise a C2 domain in the interval 224 to 343; sequence WVTTINNCID…PNGSEISLWL (120 aa). Residues Asp-260, Asp-266, Asp-312, Asp-314, and Asp-320 each contribute to the Ca(2+) site. In terms of domain architecture, Rho-GAP spans 381–567; it reads NSLEAIVKNR…FVFENSQQIL (187 aa).

Ca(2+) is required as a cofactor.

It is found in the cytoplasm. In terms of biological role, rho GTPase-activating protein involved in the signal transduction pathway. The chain is Rho GTPase-activating protein gacEE (gacEE) from Dictyostelium discoideum (Social amoeba).